We begin with the raw amino-acid sequence, 614 residues long: DNA mismatch repair protein MutL (614 aa).

The protein belongs to the DNA mismatch repair MutL/HexB family.

Its function is as follows. This protein is involved in the repair of mismatches in DNA. It is required for dam-dependent methyl-directed DNA mismatch repair. May act as a 'molecular matchmaker', a protein that promotes the formation of a stable complex between two or more DNA-binding proteins in an ATP-dependent manner without itself being part of a final effector complex. The protein is DNA mismatch repair protein MutL of Thermoanaerobacter pseudethanolicus (strain ATCC 33223 / 39E) (Clostridium thermohydrosulfuricum).